The chain runs to 291 residues: tRNA U34 carboxymethyltransferase (291 aa).

Residues Lys-61, Trp-75, Lys-80, Gly-100, Asp-122–Ser-124, Val-149–Glu-150, Tyr-169, and Arg-284 each bind carboxy-S-adenosyl-L-methionine.

This sequence belongs to the class I-like SAM-binding methyltransferase superfamily. CmoB family. As to quaternary structure, homotetramer.

The catalysed reaction is carboxy-S-adenosyl-L-methionine + 5-hydroxyuridine(34) in tRNA = 5-carboxymethoxyuridine(34) in tRNA + S-adenosyl-L-homocysteine + H(+). Its function is as follows. Catalyzes carboxymethyl transfer from carboxy-S-adenosyl-L-methionine (Cx-SAM) to 5-hydroxyuridine (ho5U) to form 5-carboxymethoxyuridine (cmo5U) at position 34 in tRNAs. This is tRNA U34 carboxymethyltransferase from Campylobacter jejuni subsp. jejuni serotype O:23/36 (strain 81-176).